Reading from the N-terminus, the 213-residue chain is MEAIWLYQFRLIVIGDSTVGKSCLIRRFTEGRFAQVSDPTVGVDFFSRLVEIEPGKRIKLQIWDTAGQERFRSITRAYYRNSVGGLLLFDITNRRSFQNVHEWLEETKVHVQPYQIVFVLVGHKCDLDTQRQVTRHEAEKLAAAYGMKYIETSARDAINVEKAFTDLTRDIYELVKRGDITIQEGWEGVKSGFVPNVVHSSEEVVKSERRCLC.

The GTP site is built by serine 17, glycine 20, lysine 21, serine 22, cysteine 23, serine 37, and threonine 40. Serine 22 provides a ligand contact to Mg(2+). Residues 35–43 (QVSDPTVGV) form a switch-I region. The Mg(2+) site is built by threonine 40 and aspartate 64. Glycine 67, histidine 123, lysine 124, aspartate 126, alanine 154, and arginine 155 together coordinate GTP. The interval 67–83 (GQERFRSITRAYYRNSV) is switch-II. The residue at position 201 (serine 201) is a Phosphoserine. 2 S-geranylgeranyl cysteine lipidation sites follow: cysteine 211 and cysteine 213. Cysteine 213 is subject to Cysteine methyl ester.

Belongs to the small GTPase superfamily. Rab family. As to quaternary structure, interacts (GDP-bound) with C9orf72; C9orf72 in complex with SMCR8 acts as a GEF for RAB39B. Interacts (in GTP-bound form) with PICK1 (via PDZ domain); a PICK1 homodimer may allow simultaneous association of RAB39B and GRIA2 to PICK1 which is involved in GRIA2 trafficking. Interacts with isoform c of RASSF1; the interaction is strong. Interacts with isoform a of RASSF1; the interaction is weak. Interacts with the DLG4/PSD-95. Interacts (GTP-bound) with HOPS complex components VPS39 and VPS41. Requires Mg(2+) as cofactor.

It is found in the cell membrane. The protein resides in the cytoplasmic vesicle membrane. The protein localises to the golgi apparatus. Its subcellular location is the cytoplasmic vesicle. It localises to the autophagosome membrane. It is found in the autolysosome membrane. It catalyses the reaction GTP + H2O = GDP + phosphate + H(+). Its activity is regulated as follows. Regulated by guanine nucleotide exchange factors (GEFs) including C9orf72-SMCR8 complex, which promote the exchange of bound GDP for free GTP. Regulated by GTPase activating proteins (GAPs) which increase the GTP hydrolysis activity. Inhibited by GDP dissociation inhibitors (GDIs). The small GTPases Rab are key regulators of intracellular membrane trafficking, from the formation of transport vesicles to their fusion with membranes. Rabs cycle between an inactive GDP-bound form and an active GTP-bound form that is able to recruit to membranes different sets of downstream effectors directly responsible for vesicle formation, movement, tethering and fusion. RAB39B is involved in autophagy and may function in autophagosome formation. Binds downstream effector PICK1 to ensure selectively GRIA2 exit from the endoplasmic reticulum to the Golgi and to regulate AMPAR composition at the post-synapses and thus synaptic transmission. May regulate the homeostasis of SNCA/alpha-synuclein. In Bos taurus (Bovine), this protein is Ras-related protein Rab-39B (RAB39B).